We begin with the raw amino-acid sequence, 229 residues long: 2-C-methyl-D-erythritol 4-phosphate cytidylyltransferase (229 aa).

The protein belongs to the IspD/TarI cytidylyltransferase family. IspD subfamily.

The enzyme catalyses 2-C-methyl-D-erythritol 4-phosphate + CTP + H(+) = 4-CDP-2-C-methyl-D-erythritol + diphosphate. Its pathway is isoprenoid biosynthesis; isopentenyl diphosphate biosynthesis via DXP pathway; isopentenyl diphosphate from 1-deoxy-D-xylulose 5-phosphate: step 2/6. In terms of biological role, catalyzes the formation of 4-diphosphocytidyl-2-C-methyl-D-erythritol from CTP and 2-C-methyl-D-erythritol 4-phosphate (MEP). In Neisseria gonorrhoeae (strain ATCC 700825 / FA 1090), this protein is 2-C-methyl-D-erythritol 4-phosphate cytidylyltransferase.